The following is a 141-amino-acid chain: ATP synthase epsilon chain 1 (141 aa).

Belongs to the ATPase epsilon chain family. As to quaternary structure, F-type ATPases have 2 components, CF(1) - the catalytic core - and CF(0) - the membrane proton channel. CF(1) has five subunits: alpha(3), beta(3), gamma(1), delta(1), epsilon(1). CF(0) has three main subunits: a, b and c.

The protein localises to the cell inner membrane. Functionally, produces ATP from ADP in the presence of a proton gradient across the membrane. This chain is ATP synthase epsilon chain 1, found in Paraburkholderia xenovorans (strain LB400).